A 442-amino-acid polypeptide reads, in one-letter code: NADH-quinone oxidoreductase subunit D (442 aa).

Belongs to the complex I 49 kDa subunit family. In terms of assembly, NDH-1 is composed of 14 different subunits. Subunits NuoB, C, D, E, F, and G constitute the peripheral sector of the complex.

Its subcellular location is the cell membrane. The enzyme catalyses a quinone + NADH + 5 H(+)(in) = a quinol + NAD(+) + 4 H(+)(out). In terms of biological role, NDH-1 shuttles electrons from NADH, via FMN and iron-sulfur (Fe-S) centers, to quinones in the respiratory chain. The immediate electron acceptor for the enzyme in this species is believed to be a menaquinone. Couples the redox reaction to proton translocation (for every two electrons transferred, four hydrogen ions are translocated across the cytoplasmic membrane), and thus conserves the redox energy in a proton gradient. This Mycolicibacterium smegmatis (strain ATCC 700084 / mc(2)155) (Mycobacterium smegmatis) protein is NADH-quinone oxidoreductase subunit D.